The following is a 491-amino-acid chain: Glycogen synthase (491 aa).

Lys-15 provides a ligand contact to ADP-alpha-D-glucose.

Belongs to the glycosyltransferase 1 family. Bacterial/plant glycogen synthase subfamily.

The catalysed reaction is [(1-&gt;4)-alpha-D-glucosyl](n) + ADP-alpha-D-glucose = [(1-&gt;4)-alpha-D-glucosyl](n+1) + ADP + H(+). It functions in the pathway glycan biosynthesis; glycogen biosynthesis. Its function is as follows. Synthesizes alpha-1,4-glucan chains using ADP-glucose. The polypeptide is Glycogen synthase (Treponema denticola (strain ATCC 35405 / DSM 14222 / CIP 103919 / JCM 8153 / KCTC 15104)).